The sequence spans 572 residues: Proline--tRNA ligase (572 aa).

Belongs to the class-II aminoacyl-tRNA synthetase family. ProS type 1 subfamily. Homodimer.

The protein resides in the cytoplasm. It catalyses the reaction tRNA(Pro) + L-proline + ATP = L-prolyl-tRNA(Pro) + AMP + diphosphate. In terms of biological role, catalyzes the attachment of proline to tRNA(Pro) in a two-step reaction: proline is first activated by ATP to form Pro-AMP and then transferred to the acceptor end of tRNA(Pro). As ProRS can inadvertently accommodate and process non-cognate amino acids such as alanine and cysteine, to avoid such errors it has two additional distinct editing activities against alanine. One activity is designated as 'pretransfer' editing and involves the tRNA(Pro)-independent hydrolysis of activated Ala-AMP. The other activity is designated 'posttransfer' editing and involves deacylation of mischarged Ala-tRNA(Pro). The misacylated Cys-tRNA(Pro) is not edited by ProRS. The protein is Proline--tRNA ligase of Escherichia coli O7:K1 (strain IAI39 / ExPEC).